The primary structure comprises 437 residues: Homogentisate 1,2-dioxygenase (437 aa).

Residues 15 to 34 are disordered; sequence NEHATSDPRVPDALPVGQNS. Residues histidine 336, glutamate 342, and histidine 372 each contribute to the Fe cation site.

The protein belongs to the homogentisate dioxygenase family. Requires Fe cation as cofactor. Expressed in the hypodermis and intestine.

The catalysed reaction is homogentisate + O2 = 4-maleylacetoacetate + H(+). It functions in the pathway amino-acid degradation; L-phenylalanine degradation; acetoacetate and fumarate from L-phenylalanine: step 4/6. Plays a role in the tyrosine degradation pathway. The polypeptide is Homogentisate 1,2-dioxygenase (Caenorhabditis elegans).